We begin with the raw amino-acid sequence, 466 residues long: 3-isopropylmalate dehydratase large subunit (466 aa).

Residues Cys-347, Cys-407, and Cys-410 each contribute to the [4Fe-4S] cluster site.

Belongs to the aconitase/IPM isomerase family. LeuC type 1 subfamily. As to quaternary structure, heterodimer of LeuC and LeuD. It depends on [4Fe-4S] cluster as a cofactor.

The enzyme catalyses (2R,3S)-3-isopropylmalate = (2S)-2-isopropylmalate. It functions in the pathway amino-acid biosynthesis; L-leucine biosynthesis; L-leucine from 3-methyl-2-oxobutanoate: step 2/4. Catalyzes the isomerization between 2-isopropylmalate and 3-isopropylmalate, via the formation of 2-isopropylmaleate. The protein is 3-isopropylmalate dehydratase large subunit of Pectobacterium atrosepticum (strain SCRI 1043 / ATCC BAA-672) (Erwinia carotovora subsp. atroseptica).